We begin with the raw amino-acid sequence, 386 residues long: Aspartate carbamoyltransferase 1, chloroplastic (386 aa).

The N-terminal 39 residues, 1–39 (MTVASMLSSNSMNVGVSNPKMSSKTSACCLLNRPWPSSC), are a transit peptide targeting the chloroplast. Residues arginine 132 and threonine 133 each coordinate carbamoyl phosphate. Residues arginine 132 and threonine 133 each coordinate UMP. Lysine 162 contributes to the L-aspartate binding site. Arginine 183, histidine 211, and glutamine 214 together coordinate carbamoyl phosphate. Positions 183 and 211 each coordinate UMP. The UMP site is built by arginine 244 and arginine 306. Residues arginine 244 and arginine 306 each coordinate L-aspartate. Carbamoyl phosphate-binding residues include leucine 346 and proline 347.

It belongs to the aspartate/ornithine carbamoyltransferase superfamily. ATCase family. As to quaternary structure, homotrimer.

Its subcellular location is the plastid. It is found in the chloroplast. The enzyme catalyses carbamoyl phosphate + L-aspartate = N-carbamoyl-L-aspartate + phosphate + H(+). It participates in pyrimidine metabolism; UMP biosynthesis via de novo pathway; (S)-dihydroorotate from bicarbonate: step 2/3. Its activity is regulated as follows. Feedback inhibited by UMP. In terms of biological role, catalyzes the condensation of carbamoyl phosphate and aspartate to form carbamoyl aspartate and inorganic phosphate, the committed step in the de novo pyrimidine nucleotide biosynthesis pathway. The sequence is that of Aspartate carbamoyltransferase 1, chloroplastic (PYRB1) from Pisum sativum (Garden pea).